A 414-amino-acid chain; its full sequence is Esterase FrsA (414 aa).

The protein belongs to the FrsA family.

The catalysed reaction is a carboxylic ester + H2O = an alcohol + a carboxylate + H(+). Catalyzes the hydrolysis of esters. The protein is Esterase FrsA of Salmonella agona (strain SL483).